The primary structure comprises 434 residues: D-amino acid dehydrogenase (434 aa).

3–17 serves as a coordination point for FAD; it reads VVILGSGVVGVASAW.

The protein belongs to the DadA oxidoreductase family. FAD is required as a cofactor.

It carries out the reaction a D-alpha-amino acid + A + H2O = a 2-oxocarboxylate + AH2 + NH4(+). Its pathway is amino-acid degradation; D-alanine degradation; NH(3) and pyruvate from D-alanine: step 1/1. Functionally, oxidative deamination of D-amino acids. This is D-amino acid dehydrogenase from Yersinia enterocolitica serotype O:8 / biotype 1B (strain NCTC 13174 / 8081).